The primary structure comprises 297 residues: Tyrosine recombinase XerC (297 aa).

In terms of domain architecture, Core-binding (CB) spans 1 to 83 (MAILDEFDEH…AVKAFTAWAK (83 aa)). The region spanning 104-291 (TLPAVLRQDQ…AVSRLRVVHD (188 aa)) is the Tyr recombinase domain. Residues Arg-148, Lys-172, His-243, Arg-246, and His-269 contribute to the active site. Residue Tyr-278 is the O-(3'-phospho-DNA)-tyrosine intermediate of the active site.

Belongs to the 'phage' integrase family. XerC subfamily. As to quaternary structure, forms a cyclic heterotetrameric complex composed of two molecules of XerC and two molecules of XerD.

The protein localises to the cytoplasm. Its function is as follows. Site-specific tyrosine recombinase, which acts by catalyzing the cutting and rejoining of the recombining DNA molecules. The XerC-XerD complex is essential to convert dimers of the bacterial chromosome into monomers to permit their segregation at cell division. It also contributes to the segregational stability of plasmids. This is Tyrosine recombinase XerC from Mycobacterium leprae (strain TN).